Consider the following 85-residue polypeptide: Hepcidin (85 aa).

The signal sequence occupies residues 1-22 (MALSTRIQAACLLLLLLASVAS). Residues 23–54 (VSVLPHQTGQLTDLRAQDTAGAEAGLQPTLQL) constitute a propeptide that is removed on maturation. Cystine bridges form between Cys-67–Cys-83, Cys-70–Cys-73, Cys-71–Cys-79, and Cys-74–Cys-82.

It belongs to the hepcidin family. In terms of assembly, interacts with SLC40A1; this interaction promotes SLC40A1 rapid ubiquitination.

The protein resides in the secreted. In terms of biological role, liver-produced hormone that constitutes the main circulating regulator of iron absorption and distribution across tissues. Acts by promoting endocytosis and degradation of ferroportin/SLC40A1, leading to the retention of iron in iron-exporting cells and decreased flow of iron into plasma. Controls the major flows of iron into plasma: absorption of dietary iron in the intestine, recycling of iron by macrophages, which phagocytose old erythrocytes and other cells, and mobilization of stored iron from hepatocytes. Functionally, has strong antimicrobial activity against E.coli ML35P N.cinerea and weaker against S.epidermidis, S.aureus and group b streptococcus bacteria. Active against the fungus C.albicans. No activity against P.aeruginosa. This is Hepcidin (HAMP) from Canis lupus familiaris (Dog).